We begin with the raw amino-acid sequence, 110 residues long: Protein YcgL (110 aa).

A YcgL domain is found at 14-98 (MFCVIYRSSK…PPEDLLKQHL (85 aa)). A disordered region spans residues 88 to 110 (PPPEDLLKQHLSSVGQNTSHADR). Positions 97–110 (HLSSVGQNTSHADR) are enriched in polar residues.

The chain is Protein YcgL from Salmonella typhi.